Consider the following 727-residue polypeptide: 1,4-alpha-glucan branching enzyme GlgB (727 aa).

Aspartate 411 acts as the Nucleophile in catalysis. The Proton donor role is filled by glutamate 464.

The protein belongs to the glycosyl hydrolase 13 family. GlgB subfamily. As to quaternary structure, monomer.

The catalysed reaction is Transfers a segment of a (1-&gt;4)-alpha-D-glucan chain to a primary hydroxy group in a similar glucan chain.. It participates in glycan biosynthesis; glycogen biosynthesis. Functionally, catalyzes the formation of the alpha-1,6-glucosidic linkages in glycogen by scission of a 1,4-alpha-linked oligosaccharide from growing alpha-1,4-glucan chains and the subsequent attachment of the oligosaccharide to the alpha-1,6 position. The protein is 1,4-alpha-glucan branching enzyme GlgB of Protochlamydia amoebophila (strain UWE25).